Reading from the N-terminus, the 509-residue chain is Cobyric acid synthase (509 aa).

The region spanning 262 to 459 (ELKVGIIKLP…IHGIFENDDW (198 aa)) is the GATase cobBQ-type domain. C343 acts as the Nucleophile in catalysis. H451 is a catalytic residue.

The protein belongs to the CobB/CobQ family. CobQ subfamily.

It functions in the pathway cofactor biosynthesis; adenosylcobalamin biosynthesis. Functionally, catalyzes amidations at positions B, D, E, and G on adenosylcobyrinic A,C-diamide. NH(2) groups are provided by glutamine, and one molecule of ATP is hydrogenolyzed for each amidation. The sequence is that of Cobyric acid synthase from Prochlorococcus marinus subsp. pastoris (strain CCMP1986 / NIES-2087 / MED4).